The primary structure comprises 304 residues: Glutaminase (304 aa).

7 residues coordinate substrate: Ser-63, Asn-114, Glu-158, Asn-165, Tyr-189, Tyr-240, and Val-258.

It belongs to the glutaminase family. As to quaternary structure, homotetramer.

The catalysed reaction is L-glutamine + H2O = L-glutamate + NH4(+). The polypeptide is Glutaminase (Shewanella baltica (strain OS155 / ATCC BAA-1091)).